Consider the following 217-residue polypeptide: ATP synthase F(0) complex subunit a (217 aa).

6 helical membrane passes run 20–40 (MNWI…WILP), 70–90 (PAFL…FSLF), 100–120 (MVFS…LSTC), 126–146 (MIAH…MTII), 166–188 (LIAG…IIFI), and 193–215 (MIFE…SLYS).

The protein belongs to the ATPase A chain family. In terms of assembly, component of the ATP synthase complex composed at least of ATP5F1A/subunit alpha, ATP5F1B/subunit beta, ATP5MC1/subunit c (homooctomer), MT-ATP6/subunit a, MT-ATP8/subunit 8, ATP5ME/subunit e, ATP5MF/subunit f, ATP5MG/subunit g, ATP5MK/subunit k, ATP5MJ/subunit j, ATP5F1C/subunit gamma, ATP5F1D/subunit delta, ATP5F1E/subunit epsilon, ATP5PF/subunit F6, ATP5PB/subunit b, ATP5PD/subunit d, ATP5PO/subunit OSCP. ATP synthase complex consists of a soluble F(1) head domain (subunits alpha(3) and beta(3)) - the catalytic core - and a membrane F(0) domain - the membrane proton channel (subunits c, a, 8, e, f, g, k and j). These two domains are linked by a central stalk (subunits gamma, delta, and epsilon) rotating inside the F1 region and a stationary peripheral stalk (subunits F6, b, d, and OSCP). Interacts with DNAJC30; interaction is direct.

It is found in the mitochondrion inner membrane. The enzyme catalyses H(+)(in) = H(+)(out). Subunit a, of the mitochondrial membrane ATP synthase complex (F(1)F(0) ATP synthase or Complex V) that produces ATP from ADP in the presence of a proton gradient across the membrane which is generated by electron transport complexes of the respiratory chain. ATP synthase complex consist of a soluble F(1) head domain - the catalytic core - and a membrane F(1) domain - the membrane proton channel. These two domains are linked by a central stalk rotating inside the F(1) region and a stationary peripheral stalk. During catalysis, ATP synthesis in the catalytic domain of F(1) is coupled via a rotary mechanism of the central stalk subunits to proton translocation. With the subunit c (ATP5MC1), forms the proton-conducting channel in the F(0) domain, that contains two crucial half-channels (inlet and outlet) that facilitate proton movement from the mitochondrial intermembrane space (IMS) into the matrix. Protons are taken up via the inlet half-channel and released through the outlet half-channel, following a Grotthuss mechanism. The chain is ATP synthase F(0) complex subunit a from Rhopalosiphum padi (Bird cherry-oat aphid).